A 127-amino-acid chain; its full sequence is Ribonuclease P protein component (127 aa).

This sequence belongs to the RnpA family. Consists of a catalytic RNA component (M1 or rnpB) and a protein subunit.

The catalysed reaction is Endonucleolytic cleavage of RNA, removing 5'-extranucleotides from tRNA precursor.. Functionally, RNaseP catalyzes the removal of the 5'-leader sequence from pre-tRNA to produce the mature 5'-terminus. It can also cleave other RNA substrates such as 4.5S RNA. The protein component plays an auxiliary but essential role in vivo by binding to the 5'-leader sequence and broadening the substrate specificity of the ribozyme. This chain is Ribonuclease P protein component, found in Synechococcus sp. (strain RCC307).